Reading from the N-terminus, the 692-residue chain is Elongation factor G (692 aa).

In terms of domain architecture, tr-type G spans 8–283; sequence DRYRNIGIMA…AVVDFLPSPL (276 aa). GTP is bound by residues 17–24, 81–85, and 135–138; these read AHIDAGKT, DTPGH, and NKMD.

The protein belongs to the TRAFAC class translation factor GTPase superfamily. Classic translation factor GTPase family. EF-G/EF-2 subfamily.

It localises to the cytoplasm. Its function is as follows. Catalyzes the GTP-dependent ribosomal translocation step during translation elongation. During this step, the ribosome changes from the pre-translocational (PRE) to the post-translocational (POST) state as the newly formed A-site-bound peptidyl-tRNA and P-site-bound deacylated tRNA move to the P and E sites, respectively. Catalyzes the coordinated movement of the two tRNA molecules, the mRNA and conformational changes in the ribosome. This chain is Elongation factor G, found in Rhodospirillum rubrum (strain ATCC 11170 / ATH 1.1.1 / DSM 467 / LMG 4362 / NCIMB 8255 / S1).